A 193-amino-acid polypeptide reads, in one-letter code: Ribonuclease HII (193 aa).

The RNase H type-2 domain occupies Cys-15–Cys-193. A divalent metal cation-binding residues include Asp-21, Glu-22, and Asp-112.

It belongs to the RNase HII family. Requires Mn(2+) as cofactor. It depends on Mg(2+) as a cofactor.

It localises to the cytoplasm. It catalyses the reaction Endonucleolytic cleavage to 5'-phosphomonoester.. Endonuclease that specifically degrades the RNA of RNA-DNA hybrids. The polypeptide is Ribonuclease HII (Rickettsia conorii (strain ATCC VR-613 / Malish 7)).